The primary structure comprises 945 residues: Endo-1,4-beta-xylanase 1 (945 aa).

Basic and acidic residues predominate over residues 16 to 41 (NGDRNPDKKSRESMEVSRKDNEEPEK). The interval 16 to 50 (NGDRNPDKKSRESMEVSRKDNEEPEKQNNNNVASI) is disordered. CBM-cenC domains are found at residues 57–197 (NVIV…EGPS), 227–362 (IVVN…IEGP), and 397–541 (NILT…GPSS). N-linked (GlcNAc...) asparagine glycosylation is found at asparagine 86, asparagine 239, asparagine 305, asparagine 349, asparagine 417, asparagine 453, and asparagine 687. Positions 589–884 (SGASVRVRQI…NEAGKRFLAV (296 aa)) constitute a GH10 domain. The active-site Proton donor is glutamate 718. Glutamate 819 functions as the Nucleophile in the catalytic mechanism.

This sequence belongs to the glycosyl hydrolase 10 (cellulase F) family. As to expression, predominantly expressed in vascular bundles, but not in vessel cells. Mostly expressed in stems, at lower levels in roots, and weakly in inflorescences and seedlings.

The protein resides in the secreted. Its subcellular location is the cell wall. It catalyses the reaction Endohydrolysis of (1-&gt;4)-beta-D-xylosidic linkages in xylans.. The protein operates within glycan degradation; xylan degradation. Its function is as follows. Binds to and hydrolyzes insoluble and soluble xylan substrates. Exhibits xylanase activity. The polypeptide is Endo-1,4-beta-xylanase 1 (Arabidopsis thaliana (Mouse-ear cress)).